A 60-amino-acid chain; its full sequence is UPF0181 protein PMI1604 (60 aa).

This sequence belongs to the UPF0181 family.

In Proteus mirabilis (strain HI4320), this protein is UPF0181 protein PMI1604.